The primary structure comprises 542 residues: Esterase 6 (542 aa).

An N-terminal signal peptide occupies residues M1–A19. Residue N40 is glycosylated (N-linked (GlcNAc...) asparagine). A disulfide bridge connects residues C84 and C103. S207 functions as the Acyl-ester intermediate in the catalytic mechanism. An intrachain disulfide couples C259 to C271. 2 N-linked (GlcNAc...) asparagine glycosylation sites follow: N418 and N454. Catalysis depends on H464, which acts as the Charge relay system. A disulfide bond links C512 and C533.

Belongs to the type-B carboxylesterase/lipase family. Monomer.

The protein resides in the secreted. It carries out the reaction a carboxylic ester + H2O = an alcohol + a carboxylate + H(+). Transferred from the ejaculatory bulbs of males to the female genitals upon copulation, plays an important role in the reproductive biology. In Drosophila simulans (Fruit fly), this protein is Esterase 6 (Est-6).